The chain runs to 267 residues: Regulatory protein RecX (267 aa).

It belongs to the RecX family.

The protein localises to the cytoplasm. In terms of biological role, modulates RecA activity. The polypeptide is Regulatory protein RecX (Staphylococcus carnosus (strain TM300)).